The following is a 158-amino-acid chain: Low molecular weight phosphotyrosine protein phosphatase (158 aa).

Position 2 is an N-acetylalanine (A2). The active-site Nucleophile is C13. Residue R19 is part of the active site. The active-site Proton donor is D130. Phosphotyrosine is present on residues Y132 and Y133.

It belongs to the low molecular weight phosphotyrosine protein phosphatase family. In terms of assembly, interacts with EPHA2; dephosphorylates EPHA2. Interacts with EPHB1. As to quaternary structure, interacts with the SH3 domain of SPTAN1. There is no interaction observed for isoform 2. Phosphorylated by LCK. Phosphorylation at Tyr-132 increases its phosphatase activity. As to expression, widely expressed with highest levels in brain and liver and lowest levels in muscle.

It is found in the cytoplasm. The catalysed reaction is O-phospho-L-tyrosyl-[protein] + H2O = L-tyrosyl-[protein] + phosphate. The enzyme catalyses a phosphate monoester + H2O = an alcohol + phosphate. Inhibited by sulfhydryl reagents. In terms of biological role, acts on tyrosine phosphorylated proteins, low-MW aryl phosphates and natural and synthetic acyl phosphates with differences in substrate specificity between isoform 1 and isoform 2. The sequence is that of Low molecular weight phosphotyrosine protein phosphatase from Mus musculus (Mouse).